Reading from the N-terminus, the 467-residue chain is UTP--glucose-1-phosphate uridylyltransferase (467 aa).

UTP contacts are provided by residues 83 to 86 (LNGG), K97, Q160, and G189. 85-86 (GG) contacts substrate. Residues H190 and 218–220 (NSD) contribute to the substrate site. UTP-binding residues include D220 and K358.

Belongs to the UDPGP type 1 family.

It localises to the cytoplasm. It carries out the reaction alpha-D-glucose 1-phosphate + UTP + H(+) = UDP-alpha-D-glucose + diphosphate. Plays a central role as a glucosyl donor in cellular metabolic pathways. This chain is UTP--glucose-1-phosphate uridylyltransferase (UGPA), found in Musa acuminata (Banana).